The sequence spans 314 residues: Formylglycine-generating enzyme (314 aa).

A compositionally biased stretch (low complexity) spans 1–20 (MAVAAPSPAAAAEPGPAARP). Residues 1–31 (MAVAAPSPAAAAEPGPAARPRSTRGQVRLPG) form a disordered region. Residues asparagine 194, isoleucine 195, aspartate 208, and histidine 210 each coordinate Ca(2+). Cu(2+)-binding residues include cysteine 272 and cysteine 277.

The protein belongs to the sulfatase-modifying factor family. It depends on Cu(2+) as a cofactor.

The enzyme catalyses L-cysteinyl-[sulfatase] + 2 a thiol + O2 = an organic disulfide + 3-oxo-L-alanyl-[sulfatase] + hydrogen sulfide + H2O + H(+). It functions in the pathway protein modification; sulfatase oxidation. Functionally, oxidase that catalyzes the conversion of cysteine to 3-oxoalanine on target proteins. 3-oxoalanine modification, which is also named formylglycine (fGly), occurs in the maturation of arylsulfatases and some alkaline phosphatases that use the hydrated form of 3-oxoalanine as a catalytic nucleophile. The chain is Formylglycine-generating enzyme from Streptomyces coelicolor (strain ATCC BAA-471 / A3(2) / M145).